A 381-amino-acid chain; its full sequence is ATP-dependent (S)-NAD(P)H-hydrate dehydratase (381 aa).

One can recognise a YjeF C-terminal domain in the interval 84–376 (AEAVVRRITP…EFLGKSLEDI (293 aa)). (6S)-NADPHX is bound by residues Gly-197 and 250 to 256 (NVYEYKR). Residues 290-294 (KGKAD) and 309-318 (GSPRRCGGQG) each bind ATP. Asp-319 contributes to the (6S)-NADPHX binding site.

It belongs to the NnrD/CARKD family. The cofactor is Mg(2+).

It catalyses the reaction (6S)-NADHX + ATP = ADP + phosphate + NADH + H(+). It carries out the reaction (6S)-NADPHX + ATP = ADP + phosphate + NADPH + H(+). In terms of biological role, catalyzes the dehydration of the S-form of NAD(P)HX at the expense of ATP, which is converted to ADP. Together with NAD(P)HX epimerase, which catalyzes the epimerization of the S- and R-forms, the enzyme allows the repair of both epimers of NAD(P)HX, a damaged form of NAD(P)H that is a result of enzymatic or heat-dependent hydration. This Sorghum bicolor (Sorghum) protein is ATP-dependent (S)-NAD(P)H-hydrate dehydratase.